The sequence spans 347 residues: NADH-quinone oxidoreductase subunit H (347 aa).

Helical transmembrane passes span L13 to L33, P50 to F70, G82 to I102, V115 to G135, I161 to V181, F198 to L218, F248 to V268, V286 to V306, and V325 to G345.

The protein belongs to the complex I subunit 1 family. In terms of assembly, NDH-1 is composed of 14 different subunits. Subunits NuoA, H, J, K, L, M, N constitute the membrane sector of the complex.

The protein resides in the cell inner membrane. The catalysed reaction is a quinone + NADH + 5 H(+)(in) = a quinol + NAD(+) + 4 H(+)(out). NDH-1 shuttles electrons from NADH, via FMN and iron-sulfur (Fe-S) centers, to quinones in the respiratory chain. The immediate electron acceptor for the enzyme in this species is believed to be ubiquinone. Couples the redox reaction to proton translocation (for every two electrons transferred, four hydrogen ions are translocated across the cytoplasmic membrane), and thus conserves the redox energy in a proton gradient. This subunit may bind ubiquinone. This chain is NADH-quinone oxidoreductase subunit H, found in Brucella ovis (strain ATCC 25840 / 63/290 / NCTC 10512).